Here is a 363-residue protein sequence, read N- to C-terminus: Pyrimidine monooxygenase RutA (363 aa).

Residues 49-50 (IK), asparagine 115, glutamate 124, 140-141 (RY), and serine 190 contribute to the FMN site.

Belongs to the NtaA/SnaA/DszA monooxygenase family. RutA subfamily.

It carries out the reaction uracil + FMNH2 + NADH + O2 = (Z)-3-ureidoacrylate + FMN + NAD(+) + H2O + H(+). It catalyses the reaction thymine + FMNH2 + NADH + O2 = (Z)-2-methylureidoacrylate + FMN + NAD(+) + H2O + H(+). Its function is as follows. Catalyzes the pyrimidine ring opening between N-3 and C-4 by an unusual flavin hydroperoxide-catalyzed mechanism, adding oxygen atoms in the process to yield ureidoacrylate peracid, that immediately reacts with FMN forming ureidoacrylate and FMN-N(5)-oxide. The FMN-N(5)-oxide reacts spontaneously with NADH to produce FMN. Requires the flavin reductase RutF to regenerate FMN in vivo. This Escherichia coli O6:K15:H31 (strain 536 / UPEC) protein is Pyrimidine monooxygenase RutA.